The sequence spans 355 residues: Phosphoserine aminotransferase (355 aa).

L-glutamate is bound at residue Arg41. Residues 75–76 (AS), Trp99, Thr147, Asp166, and Gln189 contribute to the pyridoxal 5'-phosphate site. N6-(pyridoxal phosphate)lysine is present on Lys190. Position 231–232 (231–232 (NT)) interacts with pyridoxal 5'-phosphate.

It belongs to the class-V pyridoxal-phosphate-dependent aminotransferase family. SerC subfamily. Homodimer. Pyridoxal 5'-phosphate is required as a cofactor.

The protein localises to the cytoplasm. It catalyses the reaction O-phospho-L-serine + 2-oxoglutarate = 3-phosphooxypyruvate + L-glutamate. It carries out the reaction 4-(phosphooxy)-L-threonine + 2-oxoglutarate = (R)-3-hydroxy-2-oxo-4-phosphooxybutanoate + L-glutamate. It functions in the pathway amino-acid biosynthesis; L-serine biosynthesis; L-serine from 3-phospho-D-glycerate: step 2/3. Its pathway is cofactor biosynthesis; pyridoxine 5'-phosphate biosynthesis; pyridoxine 5'-phosphate from D-erythrose 4-phosphate: step 3/5. Its function is as follows. Catalyzes the reversible conversion of 3-phosphohydroxypyruvate to phosphoserine and of 3-hydroxy-2-oxo-4-phosphonooxybutanoate to phosphohydroxythreonine. The protein is Phosphoserine aminotransferase of Bacteroides fragilis (strain ATCC 25285 / DSM 2151 / CCUG 4856 / JCM 11019 / LMG 10263 / NCTC 9343 / Onslow / VPI 2553 / EN-2).